A 770-amino-acid chain; its full sequence is Transcription activator AMTR1 (770 aa).

Positions 7 to 34 (CLTCRQRKLKCDEKKPVCRQCAKASREC) form a DNA-binding region, zn(2)-C6 fungal-type.

The protein localises to the nucleus. Functionally, transcription factor that regulates the expression of the gene clusters that mediate the biosynthesis of AM-toxins, host-selective toxins (HSTs) causing Alternaria blotch on apple, a worldwide distributed disease. AM-toxins have two target sites for affecting susceptible apple cells; they cause invagination of the plasma membrane and electrolyte loss and chloroplast disorganization. The protein is Transcription activator AMTR1 of Alternaria alternata (Alternaria rot fungus).